The sequence spans 85 residues: HPr-like protein Crh (85 aa).

Residues 1 to 85 (MVQQKVEVRL…KLAAYVQEEV (85 aa)) enclose the HPr domain. A Phosphoserine; by HPrK/P modification is found at Ser46.

Belongs to the HPr family. In terms of assembly, mixture of monomers and homodimers. Interacts with CcpA as a monomer.

In terms of biological role, along with seryl-phosphorylated HPr, phosphorylated Crh is implicated in carbon catabolite repression (CCR) of levanase, inositol dehydrogenase, and beta-xylosidase. Exerts its effect on CCR by interacting with CcpA. This chain is HPr-like protein Crh (crh), found in Bacillus subtilis (strain 168).